Here is a 1076-residue protein sequence, read N- to C-terminus: GPI inositol-deacylase A (1076 aa).

A helical membrane pass occupies residues 3 to 23 (IATFPALAITALALVLWATVA). N-linked (GlcNAc...) asparagine glycans are attached at residues Asn48 and Asn119. Ser240 is an active-site residue. Asn404 is a glycosylation site (N-linked (GlcNAc...) asparagine). 2 helical membrane passes run 765-785 (FLGFYRVMFAIFPMFVFLCLL) and 815-835 (WILAGSCAIPFVPHVLVSLLY). Asn849 is a glycosylation site (N-linked (GlcNAc...) asparagine). The next 3 membrane-spanning stretches (helical) occupy residues 855 to 875 (FLGPVSLVIATGIVVVLHWLL), 877 to 897 (ILTLWVCQCYYMLGLAPIAPE), and 910 to 930 (FLLLLVFKIVPHQFAFMVAVL). Asn952 and Asn966 each carry an N-linked (GlcNAc...) asparagine glycan. Transmembrane regions (helical) follow at residues 970 to 990 (SLLLLLVLLLPINAPTLVVWL), 1006 to 1026 (EVSAILPILLLVLTASRGIMI), and 1035 to 1055 (IYATFAFLAYFALFVLFHGVV).

Belongs to the GPI inositol-deacylase family.

The protein resides in the endoplasmic reticulum membrane. Its function is as follows. Involved in inositol deacylation of GPI-anchored proteins which plays important roles in the quality control and ER-associated degradation of GPI-anchored proteins. This chain is GPI inositol-deacylase A (BST1A), found in Yarrowia lipolytica (strain CLIB 122 / E 150) (Yeast).